Here is a 1425-residue protein sequence, read N- to C-terminus: Neuropathy target esterase sws (1425 aa).

Over 1 to 34 the chain is Lumenal; the sequence is MDVLEMLRASASGSYNTIFSDAWCQYVSKQITAT. The helical transmembrane segment at 35 to 55 threads the bilayer; it reads VYMYFALVMMSLLFIAWFLYF. Over 56-1425 the chain is Cytoplasmic; the sequence is KRMARLRLRD…RSSPNNETKN (1370 aa). An a nucleoside 3',5'-cyclic phosphate-binding site is contributed by 174 to 301; sequence IFGHFEKPVF…IRVIQVIMIR (128 aa). Polar residues-rich tracts occupy residues 332-348 and 357-366; these read TMSG…SRQA and SQMNLMQSAV. The segment at 332–410 is disordered; the sequence is TMSGPINSQT…NPDGSFHGTT (79 aa). The segment covering 367-381 has biased composition (low complexity); the sequence is SGTGSSGVSVTVTRP. 2 positions are modified to phosphoserine: Ser-444 and Ser-453. Residues 482 to 609 and 598 to 727 contribute to the a nucleoside 3',5'-cyclic phosphate site; these read ELGL…VVRR and IVLD…HRFL. Positions 952–1118 constitute a PNPLA domain; it reads LVLGGGGARG…VNNLPADVMH (167 aa). The GXGXXG signature appears at 956–961; that stretch reads GGGARG. The GXSXG signature appears at 983–987; it reads GVSIG. Ser-985 acts as the Nucleophile in catalysis. Asp-1105 serves as the catalytic Proton acceptor. Residues 1105–1107 carry the DGA/G motif; the sequence is DGG. Residue Ser-1160 is modified to Phosphoserine. The tract at residues 1330–1425 is disordered; sequence LERKTDKSTQ…RSSPNNETKN (96 aa). Low complexity predominate over residues 1337–1347; sequence STQSSPPSNSR. Basic and acidic residues predominate over residues 1348–1358; that stretch reads SDMRGKEEARH. A compositionally biased stretch (low complexity) spans 1380-1403; the sequence is TKTQTGQEQELQQEQQDQGATAEQ. Basic and acidic residues predominate over residues 1404 to 1416; it reads LVDKDKEENKENR.

It belongs to the NTE family. Interacts with Pka-C3; interaction inhibits the catalytic function of Pka-C3 and the esterase activity of sws. Isoform A and isoform B are expressed in the entire brain cortex; cortical cell bodies of adult brain. Sws and Pka-C3 are colocalized in all neurons.

The protein resides in the endoplasmic reticulum membrane. It carries out the reaction a 1-acyl-sn-glycero-3-phosphocholine + H2O = sn-glycerol 3-phosphocholine + a fatty acid + H(+). Phospholipase B that deacylates intracellular phosphatidylcholine (PtdCho), generating glycerophosphocholine (GroPtdCho). This deacylation occurs at both sn-2 and sn-1 positions of PtdCho. Its specific chemical modification by certain organophosphorus (OP) compounds leads to distal axonopathy. Plays a role in the signaling mechanism between neurons and glia that regulates glia wrapping during development of the adult brain. Essential for membrane lipid homeostasis and cell survival in both neurons and glia of the adult brain. The chain is Neuropathy target esterase sws (sws) from Drosophila melanogaster (Fruit fly).